A 239-amino-acid chain; its full sequence is Large ribosomal subunit protein uL3 (239 aa).

Disordered stretches follow at residues 140–164 (SHRS…KMPG) and 211–239 (PLPK…QEGA). Gln151 is subject to N5-methylglutamine.

This sequence belongs to the universal ribosomal protein uL3 family. In terms of assembly, part of the 50S ribosomal subunit. Forms a cluster with proteins L14 and L19. In terms of processing, methylated by PrmB.

In terms of biological role, one of the primary rRNA binding proteins, it binds directly near the 3'-end of the 23S rRNA, where it nucleates assembly of the 50S subunit. This chain is Large ribosomal subunit protein uL3, found in Bradyrhizobium sp. (strain ORS 278).